We begin with the raw amino-acid sequence, 561 residues long: GPI mannosyltransferase 3 (561 aa).

Transmembrane regions (helical) follow at residues 3–25 (LIYVFLLILAVRLASVFVVQTYY), 64–84 (IAGLYKILALLQLDSAHLLVV), 110–130 (WALFLILVPWFWFYTGSRTLA), 155–175 (LWPAAICCFLRPTAAVIWLPL), 195–215 (FVLIGLLVAGLGIAIDTYWHG), 246–266 (FSVGLPTVLGINTLPFIFGVM), 275–295 (YPVSKQLLITIFLTLVVLSAV), and 328–348 (TMLWTTALVILVGNVMPAWYL). Residues Asn-398 and Asn-456 are each glycosylated (N-linked (GlcNAc...) asparagine). A disordered region spans residues 525-546 (ENAFNRGPDSGQHEPDVHDHPP). Basic and acidic residues predominate over residues 535-546 (GQHEPDVHDHPP).

Belongs to the glycosyltransferase 22 family. PIGB subfamily.

Its subcellular location is the endoplasmic reticulum membrane. Its pathway is glycolipid biosynthesis; glycosylphosphatidylinositol-anchor biosynthesis. Functionally, mannosyltransferase involved in glycosylphosphatidylinositol-anchor biosynthesis. Transfers the third alpha-1,2-mannose to Man2-GlcN-acyl-PI during GPI precursor assembly. This is GPI mannosyltransferase 3 from Drosophila melanogaster (Fruit fly).